The following is a 383-amino-acid chain: 8-amino-7-oxononanoate synthase (383 aa).

R21 is a substrate binding site. A pyridoxal 5'-phosphate-binding site is contributed by 108–109 (GY). H133 contacts substrate. 3 residues coordinate pyridoxal 5'-phosphate: S179, H207, and T233. K236 bears the N6-(pyridoxal phosphate)lysine mark. A substrate-binding site is contributed by T350.

The protein belongs to the class-II pyridoxal-phosphate-dependent aminotransferase family. BioF subfamily. In terms of assembly, homodimer. Requires pyridoxal 5'-phosphate as cofactor.

The catalysed reaction is 6-carboxyhexanoyl-[ACP] + L-alanine + H(+) = (8S)-8-amino-7-oxononanoate + holo-[ACP] + CO2. Its pathway is cofactor biosynthesis; biotin biosynthesis. Functionally, catalyzes the decarboxylative condensation of pimeloyl-[acyl-carrier protein] and L-alanine to produce 8-amino-7-oxononanoate (AON), [acyl-carrier protein], and carbon dioxide. The chain is 8-amino-7-oxononanoate synthase from Yersinia pseudotuberculosis serotype IB (strain PB1/+).